Reading from the N-terminus, the 321-residue chain is Viral T-cell receptor beta chain-like T17T-22 (321 aa).

Positions Met-1–Ala-28 are cleaved as a signal peptide. The interval Asp-29–Ser-122 is v segment. Asn-105 carries an N-linked (GlcNAc...) asparagine; by host glycan. A d segment region spans residues Pro-123–Glu-128. The interval Tyr-129 to Val-144 is j segment. The interval Glu-145–Ser-321 is c region. N-linked (GlcNAc...) asparagine; by host glycosylation is found at Asn-214 and Asn-264.

This Feline leukemia virus protein is Viral T-cell receptor beta chain-like T17T-22 (V-TCR).